The chain runs to 402 residues: Multidrug resistance protein MdtH (402 aa).

At 1–12 (MSRVSQARNLGK) the chain is on the cytoplasmic side. The helical transmembrane segment at 13–33 (YFLLIDNMLVVLGFFVVFPLI) threads the bilayer. Residues 34–98 (SIRFVDQMGW…GFATMGIAHE (65 aa)) lie on the Periplasmic side of the membrane. A helical membrane pass occupies residues 99–116 (PWLLWFSCLLSGLGGTLF). Residues 117-138 (DPPRSALVVKLIRPQQRGRFFS) lie on the Cytoplasmic side of the membrane. A helical transmembrane segment spans residues 139–159 (LLMMQDSAGAVIGALLGSWLL). Residues 160–164 (QYDFR) lie on the Periplasmic side of the membrane. Residues 165–185 (LVCATGAVLFVLCAAFNAWLL) traverse the membrane as a helical segment. The Cytoplasmic segment spans residues 186–213 (PAWKLSTVRTPVREGMTRVMRDKRFVTY). Residues 214–234 (VLTLAGYYMLAVQVMLMLPIM) traverse the membrane as a helical segment. At 235 to 243 (VNDVAGAPS) the chain is on the periplasmic side. Residues 244–264 (AVKWMYAIEACLSLTLLYPIA) traverse the membrane as a helical segment. The Cytoplasmic portion of the chain corresponds to 265 to 276 (RWSEKHFRLEHR). Residues 277–297 (LMAGLLIMSLSMMPVGMVSGL) traverse the membrane as a helical segment. Over 298-299 (QQ) the chain is Periplasmic. A helical membrane pass occupies residues 300-320 (LFNLICLFYIGSIIAEPARET). Topologically, residues 321-339 (LSASLADARARGSYMGFSR) are cytoplasmic. Residues 340–360 (LGLAIGGAIGYIGGGWLFDLG) form a helical membrane-spanning segment. Topologically, residues 361 to 367 (KSAHQPE) are periplasmic. The helical transmembrane segment at 368–388 (LPWMMLGIIGIFTFLALGWQF) threads the bilayer. Residues 389–402 (SQKRAARRLLERDA) are Cytoplasmic-facing.

This sequence belongs to the major facilitator superfamily. DHA1 family. MdtH (TC 2.A.1.2.21) subfamily.

Its subcellular location is the cell inner membrane. In terms of biological role, confers resistance to norfloxacin and enoxacin. The protein is Multidrug resistance protein MdtH of Escherichia coli O9:H4 (strain HS).